We begin with the raw amino-acid sequence, 261 residues long: High-affinity zinc uptake system membrane protein ZnuB (261 aa).

Topologically, residues M1 to P7 are periplasmic. A helical transmembrane segment spans residues G8–W28. Over R29–D53 the chain is Cytoplasmic. Residues V54–L74 traverse the membrane as a helical segment. The Periplasmic portion of the chain corresponds to E75–D83. A helical membrane pass occupies residues T84–M104. The Cytoplasmic segment spans residues S105 to A121. Residues V122–F142 traverse the membrane as a helical segment. The Periplasmic segment spans residues W143–A177. The chain crosses the membrane as a helical span at residues L178 to I198. Topologically, residues P199–M213 are cytoplasmic. A helical transmembrane segment spans residues A214 to V234. A topological domain (periplasmic) is located at residue Y235. A helical membrane pass occupies residues D236 to M256. Residues K257–S261 lie on the Cytoplasmic side of the membrane.

This sequence belongs to the ABC-3 integral membrane protein family.

It localises to the cell inner membrane. Involved in the high-affinity zinc uptake transport system. This chain is High-affinity zinc uptake system membrane protein ZnuB (znuB), found in Escherichia coli (strain K12).